Here is a 248-residue protein sequence, read N- to C-terminus: tRNA (guanine-N(1)-)-methyltransferase (248 aa).

S-adenosyl-L-methionine-binding positions include Gly113 and Ile133–Leu138.

Belongs to the RNA methyltransferase TrmD family. In terms of assembly, homodimer.

The protein localises to the cytoplasm. The catalysed reaction is guanosine(37) in tRNA + S-adenosyl-L-methionine = N(1)-methylguanosine(37) in tRNA + S-adenosyl-L-homocysteine + H(+). Specifically methylates guanosine-37 in various tRNAs. This chain is tRNA (guanine-N(1)-)-methyltransferase, found in Shewanella woodyi (strain ATCC 51908 / MS32).